The chain runs to 138 residues: Large ribosomal subunit protein uL16 (138 aa).

Residues 1 to 13 show a composition bias toward basic residues; sequence MLQPSRRKFRKEQ. A disordered region spans residues 1–20; sequence MLQPSRRKFRKEQKGRNTGV.

Belongs to the universal ribosomal protein uL16 family. In terms of assembly, part of the 50S ribosomal subunit.

In terms of biological role, binds 23S rRNA and is also seen to make contacts with the A and possibly P site tRNAs. The polypeptide is Large ribosomal subunit protein uL16 (Leptothrix cholodnii (strain ATCC 51168 / LMG 8142 / SP-6) (Leptothrix discophora (strain SP-6))).